Here is a 322-residue protein sequence, read N- to C-terminus: MEELRNDWTLKEVEILFSLPFNDLLFQAHRIHRQNFDPNQIQVSSLLNIKTGACPEDCSYCSQSSKYDTGLEREKLMEIDLVLQQAKEAQDIGATRFCMGAAWRNPTDKSLAKVILMIQGVKTMGMETCVTLGMLTQEQAFILKEAGLDYYNHNIDTSKEHYSNVVTTRNFQDRLNTLESVQNANIHVCSGGILGLDESQTDRASMLRSLSNLRTHPDSVPFNLLVPIPGTPFENIEPPTESEFVRTIAVARIMMPKSVVRLSAGRTKMGEAMQALCFFAGANSIFYGEQLLTTDNPNINSDKDLFARLGINQKKVNNLQSV.

The region spanning 39–266 (NQIQVSSLLN…KSVVRLSAGR (228 aa)) is the Radical SAM core domain. [4Fe-4S] cluster-binding residues include Cys-54, Cys-58, and Cys-61. Positions 98, 129, 189, and 261 each coordinate [2Fe-2S] cluster.

It belongs to the radical SAM superfamily. Biotin synthase family. As to quaternary structure, homodimer. [4Fe-4S] cluster serves as cofactor. Requires [2Fe-2S] cluster as cofactor.

The enzyme catalyses (4R,5S)-dethiobiotin + (sulfur carrier)-SH + 2 reduced [2Fe-2S]-[ferredoxin] + 2 S-adenosyl-L-methionine = (sulfur carrier)-H + biotin + 2 5'-deoxyadenosine + 2 L-methionine + 2 oxidized [2Fe-2S]-[ferredoxin]. It functions in the pathway cofactor biosynthesis; biotin biosynthesis; biotin from 7,8-diaminononanoate: step 2/2. Its function is as follows. Catalyzes the conversion of dethiobiotin (DTB) to biotin by the insertion of a sulfur atom into dethiobiotin via a radical-based mechanism. This Ruthia magnifica subsp. Calyptogena magnifica protein is Biotin synthase.